We begin with the raw amino-acid sequence, 409 residues long: Broad specificity amino-acid racemase (409 aa).

An N-terminal signal peptide occupies residues 1–23 (MPFSRTLLALSLGMALLQNPAFA). Cys70 and Cys96 are oxidised to a cystine. The Proton acceptor role is filled by Lys74. Lys74 is subject to N6-(pyridoxal phosphate)lysine. Arg173 serves as a coordination point for substrate. Catalysis depends on Tyr300, which acts as the Proton acceptor. Residue Met348 coordinates substrate.

The protein belongs to the alanine racemase family. Bsr subfamily. Homodimer. It depends on pyridoxal 5'-phosphate as a cofactor.

The protein localises to the periplasm. It carries out the reaction an L-alpha-amino acid = a D-alpha-amino acid. The catalysed reaction is L-lysine = D-lysine. It catalyses the reaction L-arginine = D-arginine. The enzyme catalyses L-ornithine = D-ornithine. It carries out the reaction L-alanine = D-alanine. The catalysed reaction is L-methionine = D-methionine. Functionally, amino-acid racemase able to utilize a broad range of substrates. Is mostly active with lysine and arginine and, to a lesser extent, with ornithine, whereas is about 10 times less active with alanine, methionine and ethionine. With phenylalanine as substrate only a trace activity is detectable, and is inactive with glutamate. Plays a key role in the catabolism of D-arginine and D-lysine, that allows P.taetrolens strain NBRC 3460 to grow on these basic D-amino acids as a sole carbon source. The sequence is that of Broad specificity amino-acid racemase from Pseudomonas taetrolens.